The primary structure comprises 61 residues: Small ribosomal subunit protein uS14 (61 aa).

Cys-24, Cys-27, Cys-40, and Cys-43 together coordinate Zn(2+).

It belongs to the universal ribosomal protein uS14 family. Zinc-binding uS14 subfamily. As to quaternary structure, part of the 30S ribosomal subunit. Contacts proteins S3 and S10. Zn(2+) serves as cofactor.

In terms of biological role, binds 16S rRNA, required for the assembly of 30S particles and may also be responsible for determining the conformation of the 16S rRNA at the A site. The chain is Small ribosomal subunit protein uS14 from Chloroflexus aurantiacus (strain ATCC 29364 / DSM 637 / Y-400-fl).